A 478-amino-acid polypeptide reads, in one-letter code: Allene oxide synthase 2 (478 aa).

Residues K88, H119, and K123 each contribute to the heme b site. Position 278 (N278) interacts with (13S)-hydroperoxy-(9Z,11E,15Z)-octadecatrienoate. Heme b contacts are provided by K427 and C429.

It belongs to the cytochrome P450 family. Heme b serves as cofactor. Weakly expressed in roots, shoots, leaves and flowers.

The catalysed reaction is (13S)-hydroperoxy-(9Z,11E,15Z)-octadecatrienoate = (9Z,13S,15Z)-12,13-epoxyoctadeca-9,11,15-trienoate + H2O. It functions in the pathway lipid metabolism; oxylipin biosynthesis. Functionally, involved in the biosynthesis of jasmonic acid, a growth regulator that is implicated also as a signaling molecule in plant defense. Converts 13-hydroperoxylinolenic acid to 12,13-epoxylinolenic acid. The polypeptide is Allene oxide synthase 2 (CYP74A2) (Oryza sativa subsp. japonica (Rice)).